The chain runs to 171 residues: Lipoprotein signal peptidase (171 aa).

3 helical membrane passes run 8–28 (SFLW…YIVV), 64–84 (WQQY…VYFL), and 99–119 (ALII…GFVV). Catalysis depends on residues D120 and D138. Residues 133–153 (VFNIADIAICIGAGLLVLDAF) form a helical membrane-spanning segment.

Belongs to the peptidase A8 family.

The protein localises to the cell inner membrane. It carries out the reaction Release of signal peptides from bacterial membrane prolipoproteins. Hydrolyzes -Xaa-Yaa-Zaa-|-(S,diacylglyceryl)Cys-, in which Xaa is hydrophobic (preferably Leu), and Yaa (Ala or Ser) and Zaa (Gly or Ala) have small, neutral side chains.. It functions in the pathway protein modification; lipoprotein biosynthesis (signal peptide cleavage). Functionally, this protein specifically catalyzes the removal of signal peptides from prolipoproteins. In Haemophilus influenzae (strain ATCC 51907 / DSM 11121 / KW20 / Rd), this protein is Lipoprotein signal peptidase.